The chain runs to 156 residues: Sperm acrosome-associated protein 5 (156 aa).

The first 18 residues, Met-1 to Ala-18, serve as a signal peptide directing secretion. The 129-residue stretch at Lys-19 to Asn-147 folds into the C-type lysozyme domain. 4 disulfides stabilise this stretch: Cys-24-Cys-144, Cys-48-Cys-132, Cys-82-Cys-97, and Cys-93-Cys-111. The active site involves Glu-53.

It belongs to the glycosyl hydrolase 22 family.

The protein localises to the secreted. It catalyses the reaction Hydrolysis of (1-&gt;4)-beta-linkages between N-acetylmuramic acid and N-acetyl-D-glucosamine residues in a peptidoglycan and between N-acetyl-D-glucosamine residues in chitodextrins.. The chain is Sperm acrosome-associated protein 5 (SPACA5) from Bos taurus (Bovine).